A 124-amino-acid polypeptide reads, in one-letter code: Fluoride-specific ion channel FluC (124 aa).

A run of 4 helical transmembrane segments spans residues 3 to 23 (YLLV…INTV), 36 to 56 (TFFI…YFAF), 66 to 86 (LFLM…SLDA), and 100 to 120 (LYVL…LALI). Residues Gly-74 and Thr-77 each coordinate Na(+).

It belongs to the fluoride channel Fluc/FEX (TC 1.A.43) family.

The protein resides in the cell inner membrane. The catalysed reaction is fluoride(in) = fluoride(out). Its activity is regulated as follows. Na(+) is not transported, but it plays an essential structural role and its presence is essential for fluoride channel function. In terms of biological role, fluoride-specific ion channel. Important for reducing fluoride concentration in the cell, thus reducing its toxicity. This is Fluoride-specific ion channel FluC from Rhodopseudomonas palustris (strain BisB5).